The chain runs to 290 residues: Pyridoxal kinase PdxY (290 aa).

Substrate-binding positions include Ser12 and 47-48 (TQ). ATP-binding positions include Asp114, Glu151, Lys184, and 211–214 (RPLL). Substrate is bound at residue Asp225.

This sequence belongs to the pyridoxine kinase family. PdxY subfamily. In terms of assembly, homodimer. Mg(2+) is required as a cofactor.

It catalyses the reaction pyridoxal + ATP = pyridoxal 5'-phosphate + ADP + H(+). It participates in cofactor metabolism; pyridoxal 5'-phosphate salvage; pyridoxal 5'-phosphate from pyridoxal: step 1/1. Its function is as follows. Pyridoxal kinase involved in the salvage pathway of pyridoxal 5'-phosphate (PLP). Catalyzes the phosphorylation of pyridoxal to PLP. The protein is Pyridoxal kinase PdxY of Pseudomonas putida (strain ATCC 47054 / DSM 6125 / CFBP 8728 / NCIMB 11950 / KT2440).